The chain runs to 223 residues: Putative lipoprotein NMB1126/NMB1164 (223 aa).

The first 19 residues, 1–19 (MKTVSTAVVLAAAAVSLTG), serve as a signal peptide directing secretion. Cys20 carries the N-palmitoyl cysteine lipid modification. Cys20 carries the S-diacylglycerol cysteine lipid modification.

Its subcellular location is the cell membrane. This chain is Putative lipoprotein NMB1126/NMB1164, found in Neisseria meningitidis serogroup B (strain ATCC BAA-335 / MC58).